Consider the following 210-residue polypeptide: Thymidylate kinase (210 aa).

10–17 (GPEGAGKS) contacts ATP.

This sequence belongs to the thymidylate kinase family.

It carries out the reaction dTMP + ATP = dTDP + ADP. Functionally, phosphorylation of dTMP to form dTDP in both de novo and salvage pathways of dTTP synthesis. The protein is Thymidylate kinase of Pseudomonas fluorescens (strain ATCC BAA-477 / NRRL B-23932 / Pf-5).